Here is a 420-residue protein sequence, read N- to C-terminus: MMSMNSKQPHFAMHPTLPEHKYPSLHSSSEAIRRACLPTPPLQSNLFASLDETLLARAEALAAVDIAVSQGKSHPFKPDATYHTMNSVPCTSTSTVPLAHHHHHHHHHQALEPGDLLDHISSPSLALMAGAGGAGAAGGGGAPTRPRGAGGPGGGGGPGGGGPGVAGRRRGPGGGGGGPGGGLLGXSAHPHPHMHGXGHLSHPAAAAAMNMPSGLPHPGLVAAAAHHGAAAAAAAAAAGQVAAASAAAAVVGAAGLASICDSDTDPRELEAFAERFKQRRIKLGVTQADVGSALANLKIPGVGSLSQSTICRFESLTLSHNNMIALKPILQAWLEEAEGAQREKMNKPELFNGGEKKRKRTSIAAPEKRSLEAYFAVQPRPSSEKIAAIAEKLDLKKNVVRVWFCNQRQKQKRMKFSATY.

The POU-IV box motif lies at 57–66; sequence RAEALAAVDI. Disordered stretches follow at residues 94-117 and 132-200; these read STVPLAHHHHHHHHHQALEPGDLL and GGAG…XGHL. Residues 99–108 show a composition bias toward basic residues; sequence AHHHHHHHHH. Gly residues-rich tracts occupy residues 132 to 165 and 172 to 184; these read GGAGAAGGGGAPTRPRGAGGPGGGGGPGGGGPGV and PGGGGGGPGGGLL. Residues 261-338 form the POU-specific domain; that stretch reads DSDTDPRELE…ILQAWLEEAE (78 aa). Positions 356 to 415 form a DNA-binding region, homeobox; it reads KKRKRTSIAAPEKRSLEAYFAVQPRPSSEKIAAIAEKLDLKKNVVRVWFCNQRQKQKRMK.

The protein belongs to the POU transcription factor family. Class-4 subfamily. In terms of assembly, interacts (via N-terminus) with RIT2; the interaction controls POU4F1 transactivation activity on some neuronal target genes. Isoform 1 interacts with POU4F2; this interaction inhibits both POU4F1 DNA-binding and transcriptional activities. Isoform 1 interacts (C-terminus) with ESR1 (via DNA-binding domain); this interaction decreases the estrogen receptor ESR1 transcriptional activity in a DNA- and ligand 17-beta-estradiol-independent manner. Detected in brain, spinal cord and dorsal root ganglion. Isoform 2 is detected in brain, spinal cord, dorsal root ganglion and spleen.

The protein resides in the nucleus. The protein localises to the cytoplasm. Its function is as follows. Multifunctional transcription factor with different regions mediating its different effects. Acts by binding (via its C-terminal domain) to sequences related to the consensus octamer motif 5'-ATGCAAAT-3' in the regulatory regions of its target genes. Regulates the expression of specific genes involved in differentiation and survival within a subset of neuronal lineages. It has been shown that activation of some of these genes requires its N-terminal domain, maybe through a neuronal-specific cofactor. Activates BCL2 expression and protects neuronal cells from apoptosis (via the N-terminal domain). Induces neuronal process outgrowth and the coordinate expression of genes encoding synaptic proteins. Exerts its major developmental effects in somatosensory neurons and in brainstem nuclei involved in motor control. Stimulates the binding affinity of the nuclear estrogene receptor ESR1 to DNA estrogen response element (ERE), and hence modulates ESR1-induced transcriptional activity. May positively regulate POU4F2 and POU4F3. Regulates dorsal root ganglion sensory neuron specification and axonal projection into the spinal cord. Plays a role in TNFSF11-mediated terminal osteoclast differentiation. Negatively regulates its own expression interacting directly with a highly conserved autoregulatory domain surrounding the transcription initiation site. In terms of biological role, able to act as transcription factor, cannot regulate the expression of the same subset of genes than isoform 1. Does not have anitapoptotic effect on neuronal cells. This is POU domain, class 4, transcription factor 1 (Pou4f1) from Rattus norvegicus (Rat).